The following is a 352-amino-acid chain: Biotin synthase (352 aa).

A Radical SAM core domain is found at 44–262 (NRVQVSTLLS…LAVARILMPK (219 aa)). [4Fe-4S] cluster-binding residues include Cys-59, Cys-63, and Cys-66. [2Fe-2S] cluster is bound by residues Cys-103, Cys-134, Cys-194, and Arg-266.

Belongs to the radical SAM superfamily. Biotin synthase family. In terms of assembly, homodimer. [4Fe-4S] cluster is required as a cofactor. [2Fe-2S] cluster serves as cofactor.

It catalyses the reaction (4R,5S)-dethiobiotin + (sulfur carrier)-SH + 2 reduced [2Fe-2S]-[ferredoxin] + 2 S-adenosyl-L-methionine = (sulfur carrier)-H + biotin + 2 5'-deoxyadenosine + 2 L-methionine + 2 oxidized [2Fe-2S]-[ferredoxin]. It participates in cofactor biosynthesis; biotin biosynthesis; biotin from 7,8-diaminononanoate: step 2/2. In terms of biological role, catalyzes the conversion of dethiobiotin (DTB) to biotin by the insertion of a sulfur atom into dethiobiotin via a radical-based mechanism. The sequence is that of Biotin synthase from Pseudomonas putida (strain ATCC 47054 / DSM 6125 / CFBP 8728 / NCIMB 11950 / KT2440).